Reading from the N-terminus, the 820-residue chain is 1,4-alpha-glucan-branching enzyme, chloroplastic/amyloplastic (820 aa).

Over residues 1 to 20 (MLCLTSSSSSAPAPLLPSLA) the composition is skewed to low complexity. The tract at residues 1–28 (MLCLTSSSSSAPAPLLPSLADRPSPGIA) is disordered. A chloroplast-targeting transit peptide spans 1–64 (MLCLTSSSSS…SVPATARKNK (64 aa)). (1,4-alpha-D-glucosyl)n-binding residues include Trp153 and Lys188. The active-site Nucleophile is Asp409. The Proton donor role is filled by Glu464.

This sequence belongs to the glycosyl hydrolase 13 family. GlgB subfamily. Monomer.

It localises to the plastid. The protein resides in the chloroplast. Its subcellular location is the amyloplast. The catalysed reaction is Transfers a segment of a (1-&gt;4)-alpha-D-glucan chain to a primary hydroxy group in a similar glucan chain.. Its pathway is glycan biosynthesis; starch biosynthesis. Functionally, catalyzes the formation of the alpha-1,6-glucosidic linkages in starch by scission of a 1,4-alpha-linked oligosaccharide from growing alpha-1,4-glucan chains and the subsequent attachment of the oligosaccharide to the alpha-1,6 position. In Oryza sativa subsp. japonica (Rice), this protein is 1,4-alpha-glucan-branching enzyme, chloroplastic/amyloplastic (SBE1).